The primary structure comprises 71 residues: Small ribosomal subunit protein bS21 (71 aa).

The protein belongs to the bacterial ribosomal protein bS21 family.

This is Small ribosomal subunit protein bS21 from Wigglesworthia glossinidia brevipalpis.